The following is a 748-amino-acid chain: Disintegrin and metalloproteinase domain-containing protein 10 (748 aa).

Residues 1–19 (MVLLRVLILLLSWAAGMGG) form the signal peptide. Positions 20-213 (QYGNPLNKYI…NGPELLRKKR (194 aa)) are excised as a propeptide. Over 20 to 672 (QYGNPLNKYI…SPELYENIAE (653 aa)) the chain is Extracellular. The Cysteine switch signature appears at 171-178 (GGCADHSV). Position 173 (Cys-173) interacts with Zn(2+). In terms of domain architecture, Peptidase M12B spans 220 to 456 (NTCQLYIQTD…KRNNCFVESG (237 aa)). Cystine bridges form between Cys-222–Cys-313, Cys-344–Cys-451, Cys-399–Cys-435, Cys-460–Cys-495, Cys-471–Cys-484, Cys-473–Cys-479, Cys-483–Cys-515, Cys-503–Cys-511, Cys-510–Cys-536, Cys-524–Cys-543, Cys-530–Cys-562, Cys-555–Cys-567, Cys-572–Cys-598, Cys-580–Cys-607, Cys-582–Cys-597, Cys-594–Cys-639, and Cys-632–Cys-645. Asn-267 and Asn-278 each carry an N-linked (GlcNAc...) asparagine glycan. His-383 contacts Zn(2+). Glu-384 is an active-site residue. Residues His-387 and His-393 each contribute to the Zn(2+) site. Asn-439 is a glycosylation site (N-linked (GlcNAc...) asparagine). The Disintegrin domain maps to 457-551 (QPICGNGMVE…LCPASDPKPN (95 aa)). Asn-551 carries N-linked (GlcNAc...) asparagine glycosylation. Residues 673-693 (WIVAHWWAVLLMGIALIMLMA) traverse the membrane as a helical segment. Residues 694-748 (GFIKICSVHTPSSNPKLPPPKPLPGTLKRRRPPQPIQQPQRQRPRESYQMGHMRR) lie on the Cytoplasmic side of the membrane. A disordered region spans residues 704 to 748 (PSSNPKLPPPKPLPGTLKRRRPPQPIQQPQRQRPRESYQMGHMRR). Positions 708-715 (PKLPPPKP) match the SH3-binding motif. Position 719 is a phosphothreonine; by FAM20C (Thr-719). The SH3-binding signature appears at 722–728 (RRRPPQP). The tract at residues 734–748 (RQRPRESYQMGHMRR) is interaction with AP2A1, AP2A2 and AP2M1.

Forms a ternary EFNA5-EPHA3-ADAM10 complex mediating EFNA5 extracellular domain shedding by ADAM10 which regulates the EFNA5-EPHA3 complex internalization and function, the cleavage occurs in trans, with ADAM10 and its substrate being on the membranes of opposing cells. Interacts with the clathrin adapter AP2 complex subunits AP2A1, AP2A2, AP2B1, and AP2M1; this interaction facilitates ADAM10 endocytosis from the plasma membrane during long-term potentiation in hippocampal neurons. Forms a ternary complex composed of ADAM10, EPHA4 and CADH1; within the complex, ADAM10 cleaves CADH1 which disrupts adherens junctions. Interacts with EPHA2. Interacts with NGF in a divalent cation-dependent manner. Interacts with TSPAN14; the interaction promotes ADAM10 maturation and cell surface expression. Interacts with TSPAN5, TSPAN10, TSPAN14, TSPAN15, TSPAN17 and TSPAN33; these interactions regulate ADAM10 substrate specificity, endocytosis and turnover. Interacts (via extracellular domain) with TSPAN33 (via extracellular domain) and (via cytoplasmic domain) with AFDN; interaction with TSPAN33 allows the docking of ADAM10 to zonula adherens through a PDZ11-dependent interaction between TSPAN33 and PLEKHA7 while interaction with AFDN locks ADAM10 at zonula adherens. Interacts with DLG1; this interaction recruits ADAM10 to the cell membrane during long-term depression in hippocampal neurons. Interacts (via extracellular domain) with BACE1 (via extracellular domain). Interacts with FAM171A1. As to quaternary structure, (Microbial infection) Interacts with S.aureus hly; this interaction is necessary for toxin pore formation, disruption of focal adhesions and S.aureus hly-mediated cytotoxicity. The cofactor is Zn(2+). The precursor is cleaved by furin and PCSK7. Expressed in the brain (at protein level). Expressed in spleen, lymph node, thymus, peripheral blood leukocyte, bone marrow, cartilage, chondrocytes and fetal liver.

Its subcellular location is the cell membrane. It is found in the golgi apparatus membrane. The protein resides in the cytoplasmic vesicle. It localises to the clathrin-coated vesicle. The protein localises to the cell projection. Its subcellular location is the axon. It is found in the dendrite. The protein resides in the cell junction. It localises to the adherens junction. The protein localises to the cytoplasm. It carries out the reaction Endopeptidase of broad specificity.. With respect to regulation, catalytically inactive when the propeptide is intact and associated with the mature enzyme. The disintegrin and cysteine-rich regions modulate access of substrates to exerts an inhibitory effect on the cleavage of ADAM10 substrates. In terms of biological role, transmembrane metalloprotease which mediates the ectodomain shedding of a myriad of transmembrane proteins, including adhesion proteins, growth factor precursors and cytokines being essential for development and tissue homeostasis. Associates with six members of the tetraspanin superfamily TspanC8 which regulate its exit from the endoplasmic reticulum and its substrate selectivity. Cleaves the membrane-bound precursor of TNF-alpha at '76-Ala-|-Val-77' to its mature soluble form. Responsible for the proteolytical release of soluble JAM3 from endothelial cells surface. Responsible for the proteolytic release of several other cell-surface proteins, including heparin-binding epidermal growth-like factor, ephrin-A2, CD44, CDH2 and for constitutive and regulated alpha-secretase cleavage of amyloid precursor protein (APP). Contributes to the normal cleavage of the cellular prion protein. Involved in the cleavage of the adhesion molecule L1 at the cell surface and in released membrane vesicles, suggesting a vesicle-based protease activity. Also controls the proteolytic processing of Notch and mediates lateral inhibition during neurogenesis. Required for the development of type 1 transitional B cells into marginal zone B cells, probably by cleaving Notch. Responsible for the FasL ectodomain shedding and for the generation of the remnant ADAM10-processed FasL (FasL APL) transmembrane form. Also cleaves the ectodomain of the integral membrane proteins CORIN and ITM2B. Mediates the proteolytic cleavage of LAG3, leading to release the secreted form of LAG3. Mediates the proteolytic cleavage of IL6R and IL11RA, leading to the release of secreted forms of IL6R and IL11RA. Enhances the cleavage of CHL1 by BACE1. Cleaves NRCAM. Cleaves TREM2, resulting in shedding of the TREM2 ectodomain. Involved in the development and maturation of glomerular and coronary vasculature. During development of the cochlear organ of Corti, promotes pillar cell separation by forming a ternary complex with CADH1 and EPHA4 and cleaving CADH1 at adherens junctions. May regulate the EFNA5-EPHA3 signaling. Regulates leukocyte transmigration as a sheddase for the adherens junction protein VE-cadherin/CDH5 in endothelial cells. Functionally, (Microbial infection) Promotes the cytotoxic activity of S.aureus hly by binding to the toxin at zonula adherens and promoting formation of toxin pores. This chain is Disintegrin and metalloproteinase domain-containing protein 10, found in Homo sapiens (Human).